Here is a 266-residue protein sequence, read N- to C-terminus: MTITNYINNQFTFLDMAEPWQLGFQDPATPVMEGIINFHHDLMFFLISIVVFVCWMLFRVITLFDEKKNKIPATVVHGATIEIIWTSIPALILLTVAVPSFALLYSMDEVIDPIITLKVIGSQWYWSYEYSDNLEFSDEPLIFDSYMIQEDDLAIGQFRILEVDNRVVVPTNSHIRVLITASDVLHSWAIPSLGIKLDACPGRLNQTSMFIKREGVFYGQCSEICGVNHGFMPIVVEAVSLEDYLTWLKNKINFDFNVXLIKFYGI.

The Mitochondrial intermembrane segment spans residues 1-43 (MTITNYINNQFTFLDMAEPWQLGFQDPATPVMEGIINFHHDLM). Residues 44-64 (FFLISIVVFVCWMLFRVITLF) form a helical membrane-spanning segment. Residues 65-82 (DEKKNKIPATVVHGATIE) lie on the Mitochondrial matrix side of the membrane. A helical membrane pass occupies residues 83–103 (IIWTSIPALILLTVAVPSFAL). Over 104–266 (LYSMDEVIDP…NVXLIKFYGI (163 aa)) the chain is Mitochondrial intermembrane. Cu cation contacts are provided by His-186, Cys-221, Glu-223, Cys-225, His-229, and Met-232. Glu-223 serves as a coordination point for Mg(2+).

Belongs to the cytochrome c oxidase subunit 2 family. As to quaternary structure, component of the cytochrome c oxidase (complex IV, CIV), a multisubunit enzyme composed of a catalytic core of 3 subunits and several supernumerary subunits. The complex exists as a monomer or a dimer and forms supercomplexes (SCs) in the inner mitochondrial membrane with ubiquinol-cytochrome c oxidoreductase (cytochrome b-c1 complex, complex III, CIII). Cu cation is required as a cofactor.

The protein resides in the mitochondrion inner membrane. It catalyses the reaction 4 Fe(II)-[cytochrome c] + O2 + 8 H(+)(in) = 4 Fe(III)-[cytochrome c] + 2 H2O + 4 H(+)(out). Its function is as follows. Component of the cytochrome c oxidase, the last enzyme in the mitochondrial electron transport chain which drives oxidative phosphorylation. The respiratory chain contains 3 multisubunit complexes succinate dehydrogenase (complex II, CII), ubiquinol-cytochrome c oxidoreductase (cytochrome b-c1 complex, complex III, CIII) and cytochrome c oxidase (complex IV, CIV), that cooperate to transfer electrons derived from NADH and succinate to molecular oxygen, creating an electrochemical gradient over the inner membrane that drives transmembrane transport and the ATP synthase. Cytochrome c oxidase is the component of the respiratory chain that catalyzes the reduction of oxygen to water. Electrons originating from reduced cytochrome c in the intermembrane space (IMS) are transferred via the dinuclear copper A center (CU(A)) of subunit 2 and heme A of subunit 1 to the active site in subunit 1, a binuclear center (BNC) formed by heme A3 and copper B (CU(B)). The BNC reduces molecular oxygen to 2 water molecules using 4 electrons from cytochrome c in the IMS and 4 protons from the mitochondrial matrix. This Phytophthora megasperma (Potato pink rot fungus) protein is Cytochrome c oxidase subunit 2 (COX2).